Reading from the N-terminus, the 158-residue chain is Protein-export protein SecB (158 aa).

Belongs to the SecB family. Homotetramer, a dimer of dimers. One homotetramer interacts with 1 SecA dimer.

The protein resides in the cytoplasm. Functionally, one of the proteins required for the normal export of preproteins out of the cell cytoplasm. It is a molecular chaperone that binds to a subset of precursor proteins, maintaining them in a translocation-competent state. It also specifically binds to its receptor SecA. In Bartonella quintana (strain Toulouse) (Rochalimaea quintana), this protein is Protein-export protein SecB.